A 509-amino-acid chain; its full sequence is Probable cytochrome P450 4ac1 (509 aa).

Heme is bound by residues Glu-317 and Cys-454.

The protein belongs to the cytochrome P450 family. Requires heme as cofactor.

The protein localises to the endoplasmic reticulum membrane. The protein resides in the microsome membrane. Functionally, may be involved in the metabolism of insect hormones and in the breakdown of synthetic insecticides. This is Probable cytochrome P450 4ac1 (Cyp4ac1) from Drosophila melanogaster (Fruit fly).